The sequence spans 147 residues: Protein archease (147 aa).

Positions 17, 146, and 147 each coordinate Ca(2+).

The protein belongs to the archease family.

Functionally, activates the tRNA-splicing ligase complex by facilitating the enzymatic turnover of catalytic subunit RtcB. Acts by promoting the guanylylation of RtcB, a key intermediate step in tRNA ligation. Can also alter the NTP specificity of RtcB such that ATP, dGTP or ITP is used efficiently. In Pyrobaculum islandicum (strain DSM 4184 / JCM 9189 / GEO3), this protein is Protein archease.